The chain runs to 432 residues: Nematocyst expressed protein 3-like (432 aa).

The signal sequence occupies residues 1-19 (MRVVYLVLVVAVIIAITEA). Intrachain disulfides connect Cys52-Cys91, Cys59-Cys84, Cys73-Cys88, Cys125-Cys140, Cys157-Cys176, and Cys166-Cys180. 3 ShKT domains span residues 59–91 (CKAF…CKLC), 107–143 (VVRA…CMLC), and 149–183 (GPCD…CDVY). Over residues 235 to 313 (GAQYPAATAA…PEAAPSEPEA (79 aa)) the composition is skewed to low complexity. Residues 235–432 (GAQYPAATAA…KSKSGHKRHH (198 aa)) are disordered. Positions 314–330 (APAPAPEMAPAPAPEMA) are enriched in pro residues. A compositionally biased stretch (low complexity) spans 331-408 (PAPEAASAPA…AAPSEQPMPG (78 aa)). Positions 409–432 (KKSKSKPSKRKGVKKSKSGHKRHH) are enriched in basic residues.

Belongs to the NEP3 family. As to expression, nematocytes. In late planulae, transcripts are found throughout the ectoderm in nematocytes, with high concentration of expressing cells in the oral pole. In primary polyps, is expressed in nematocytes in the body wall and physa ectoderm and in the upper and lower pharynx.

It is found in the nematocyst. It localises to the secreted. Its function is as follows. Probable toxin. This chain is Nematocyst expressed protein 3-like, found in Nematostella vectensis (Starlet sea anemone).